The sequence spans 841 residues: Rho guanine nucleotide exchange factor 15 (841 aa).

3 disordered regions span residues 1-179 (MSAQ…QARA), 239-261 (RRAS…HPAV), and 279-333 (KPPK…REEE). Positions 39 to 53 (NGSSPQELPRNSNDA) are enriched in polar residues. Low complexity predominate over residues 65–110 (PPAASLKPPALLPPSASRASLDSQTSPDSPSSTPTPSPVSRRSASP). 2 positions are modified to phosphoserine: Ser107 and Ser109. Residues 111–124 (EPAPRSPVPPPKPS) are compositionally biased toward pro residues. Tyr353 bears the Phosphotyrosine; by EPHB2 mark. Positions 417 to 601 (RMQESLFEVV…SKIIERCSAE (185 aa)) constitute a DH domain. Positions 765 to 793 (ESSAPAKTEGRSLESRAAPKHLHKTPEGW) are disordered.

As to quaternary structure, interacts with EPHB2. Interacts with EPHA4. In terms of processing, phosphorylated on tyrosine residues upon EFNA1 stimulation. EPHB2-dependent phosphorylation at Tyr-353 triggers UBE3A-mediated ubiquitination. Post-translationally, ubiquitinated; UBE3A-mediated ubiquitination and degradation by the proteasome promotes EFNB1-dependent synapse formation. In terms of tissue distribution, expressed in the vascular smooth muscle of coronary artery.

The protein localises to the cell projection. It is found in the dendrite. Specific GEF for RhoA activation. Does not activate RAC1 or CDC42. Regulates vascular smooth muscle contractility. Negatively regulates excitatory synapse development by suppressing the synapse-promoting activity of EPHB2. The chain is Rho guanine nucleotide exchange factor 15 (ARHGEF15) from Homo sapiens (Human).